The following is a 223-amino-acid chain: UPF0441 protein YgiB (223 aa).

Residues 178-195 show a composition bias toward low complexity; it reads TVPKTAMAPKPATTTTVT. Residues 178–223 are disordered; it reads TVPKTAMAPKPATTTTVTRGGFGESVAKQSTMQRSATGTSSRSMGG. The segment covering 204–223 has biased composition (polar residues); it reads AKQSTMQRSATGTSSRSMGG.

The protein belongs to the UPF0441 family.

This is UPF0441 protein YgiB from Shigella dysenteriae serotype 1 (strain Sd197).